A 568-amino-acid chain; its full sequence is Urease subunit alpha (568 aa).

The 437-residue stretch at G132–F568 folds into the Urease domain. Ni(2+) contacts are provided by H137, H139, and K219. At K219 the chain carries N6-carboxylysine. Residue H221 coordinates substrate. Ni(2+) is bound by residues H248 and H274. H322 functions as the Proton donor in the catalytic mechanism. D362 contacts Ni(2+).

The protein belongs to the metallo-dependent hydrolases superfamily. Urease alpha subunit family. As to quaternary structure, heterotrimer of UreA (gamma), UreB (beta) and UreC (alpha) subunits. Three heterotrimers associate to form the active enzyme. Ni cation serves as cofactor. In terms of processing, carboxylation allows a single lysine to coordinate two nickel ions.

It is found in the cytoplasm. The catalysed reaction is urea + 2 H2O + H(+) = hydrogencarbonate + 2 NH4(+). It participates in nitrogen metabolism; urea degradation; CO(2) and NH(3) from urea (urease route): step 1/1. The sequence is that of Urease subunit alpha from Azobacteroides pseudotrichonymphae genomovar. CFP2.